The primary structure comprises 72 residues: Translation initiation factor IF-1 (72 aa).

In terms of domain architecture, S1-like spans 1–72; that stretch reads MAKDDVIEIE…TKGRITYRFK (72 aa).

Belongs to the IF-1 family. As to quaternary structure, component of the 30S ribosomal translation pre-initiation complex which assembles on the 30S ribosome in the order IF-2 and IF-3, IF-1 and N-formylmethionyl-tRNA(fMet); mRNA recruitment can occur at any time during PIC assembly.

It localises to the cytoplasm. One of the essential components for the initiation of protein synthesis. Stabilizes the binding of IF-2 and IF-3 on the 30S subunit to which N-formylmethionyl-tRNA(fMet) subsequently binds. Helps modulate mRNA selection, yielding the 30S pre-initiation complex (PIC). Upon addition of the 50S ribosomal subunit IF-1, IF-2 and IF-3 are released leaving the mature 70S translation initiation complex. The protein is Translation initiation factor IF-1 of Ligilactobacillus salivarius (strain UCC118) (Lactobacillus salivarius).